We begin with the raw amino-acid sequence, 301 residues long: Acetylglutamate kinase (301 aa).

Residues 68 to 69 (GG), arginine 90, and asparagine 195 contribute to the substrate site.

Belongs to the acetylglutamate kinase family. ArgB subfamily.

Its subcellular location is the cytoplasm. It carries out the reaction N-acetyl-L-glutamate + ATP = N-acetyl-L-glutamyl 5-phosphate + ADP. Its pathway is amino-acid biosynthesis; L-arginine biosynthesis; N(2)-acetyl-L-ornithine from L-glutamate: step 2/4. Catalyzes the ATP-dependent phosphorylation of N-acetyl-L-glutamate. This is Acetylglutamate kinase from Pseudomonas paraeruginosa (strain DSM 24068 / PA7) (Pseudomonas aeruginosa (strain PA7)).